A 400-amino-acid polypeptide reads, in one-letter code: S-adenosylmethionine synthase (400 aa).

H17 serves as a coordination point for ATP. D19 is a Mg(2+) binding site. Residue E45 participates in K(+) binding. Residues E58 and Q101 each contribute to the L-methionine site. The tract at residues 101 to 111 is flexible loop; that stretch reads QSADIAMGVDQ. Residues 177 to 179, 244 to 245, D253, 259 to 260, A276, and K280 each bind ATP; these read DGK, RF, and RK. D253 is an L-methionine binding site. K284 lines the L-methionine pocket.

This sequence belongs to the AdoMet synthase family. Homotetramer; dimer of dimers. The cofactor is Mg(2+). It depends on K(+) as a cofactor.

The protein localises to the cytoplasm. It catalyses the reaction L-methionine + ATP + H2O = S-adenosyl-L-methionine + phosphate + diphosphate. The protein operates within amino-acid biosynthesis; S-adenosyl-L-methionine biosynthesis; S-adenosyl-L-methionine from L-methionine: step 1/1. Catalyzes the formation of S-adenosylmethionine (AdoMet) from methionine and ATP. The overall synthetic reaction is composed of two sequential steps, AdoMet formation and the subsequent tripolyphosphate hydrolysis which occurs prior to release of AdoMet from the enzyme. The protein is S-adenosylmethionine synthase of Bacillus velezensis (strain DSM 23117 / BGSC 10A6 / LMG 26770 / FZB42) (Bacillus amyloliquefaciens subsp. plantarum).